We begin with the raw amino-acid sequence, 152 residues long: Ribonuclease pancreatic (152 aa).

Positions 1–24 (MALDKSVILLPLLVLVLLVLGCLG) are cleaved as a signal peptide. Lys-31 and Arg-34 together coordinate substrate. The active-site Proton acceptor is His-36. N-linked (GlcNAc...) asparagine glycosylation occurs at Asn-46. Intrachain disulfides connect Cys-50/Cys-108, Cys-64/Cys-119, Cys-82/Cys-134, and Cys-89/Cys-96. Substrate contacts are provided by residues 65-69 (KPVNT), Lys-90, and Arg-109. An N-linked (GlcNAc...) asparagine glycan is attached at Asn-112. His-143 (proton donor) is an active-site residue.

Belongs to the pancreatic ribonuclease family. Monomer. Interacts with and forms tight 1:1 complexes with RNH1. Dimerization of two such complexes may occur. Interaction with RNH1 inhibits this protein.

The protein resides in the secreted. The catalysed reaction is an [RNA] containing cytidine + H2O = an [RNA]-3'-cytidine-3'-phosphate + a 5'-hydroxy-ribonucleotide-3'-[RNA].. It carries out the reaction an [RNA] containing uridine + H2O = an [RNA]-3'-uridine-3'-phosphate + a 5'-hydroxy-ribonucleotide-3'-[RNA].. Endonuclease that catalyzes the cleavage of RNA on the 3' side of pyrimidine nucleotides. Acts on single-stranded and double-stranded RNA. This chain is Ribonuclease pancreatic (RNASE1), found in Miopithecus talapoin (Angolan talapoin).